Here is a 540-residue protein sequence, read N- to C-terminus: Beta-2-syntrophin (540 aa).

Positions 73-114 are disordered; the sequence is LPNGGGAGDSLPGSPSRGLGPPSPPAPPRGPAGEAGASPPVR. Over residues 81-92 the composition is skewed to low complexity; that stretch reads DSLPGSPSRGLG. The segment covering 93–102 has biased composition (pro residues); sequence PPSPPAPPRG. Phosphoserine occurs at positions 95, 110, 129, 211, 222, 233, 393, and 395. The span at 103–112 shows a compositional bias: low complexity; sequence PAGEAGASPP. The PDZ domain maps to 115 to 198; the sequence is RVRVVKQEAG…EVLLEVKFIR (84 aa). PH domains follow at residues 163–300 and 325–437; these read ILSV…TNIM and EVKH…QGCH. The interval 220–240 is disordered; it reads PQSPSFSGSEDSGSPKHQNST. The span at 222–231 shows a compositional bias: low complexity; it reads SPSFSGSEDS. The 57-residue stretch at 484 to 540 folds into the SU domain; it reads PFERLKMSADDGIRNLYLDFGGPEGELTMDLHSCPKPIVFVLHTFLSAKVTRMGLLV. The segment at 518–540 is calmodulin-binding; that stretch reads PKPIVFVLHTFLSAKVTRMGLLV.

It belongs to the syntrophin family. Monomer and homodimer. Interacts with the other members of the syntrophin family: SNTA1 and SNTB1; and with the sodium channel proteins SCN4A and SCN5A. Interacts with SAST, MAST205, microtubules and microtubule-associated proteins. Interacts with the dystrophin protein DMD and related proteins DTNA and UTRN, and with the neuroregulin receptor ERBB4. Interacts with PTPRN when phosphorylated, protecting PTPRN from protein cleavage by CAPN1. Dephosphorylation upon insulin stimulation disrupts the interaction with PTPRN and results in the cleavage of PTPRN. Interacts with DTNB. In terms of processing, phosphorylated. Partially dephosphorylated upon insulin stimulation. In terms of tissue distribution, ubiquitous. Isoform 1 is the predominant isoform. Weak level of isoform 2 is present in all tested tissues, except in liver and heart where it is highly expressed.

The protein resides in the membrane. It localises to the cytoplasmic vesicle. Its subcellular location is the secretory vesicle membrane. The protein localises to the cell junction. It is found in the cytoplasm. The protein resides in the cytoskeleton. Functionally, adapter protein that binds to and probably organizes the subcellular localization of a variety of membrane proteins. May link various receptors to the actin cytoskeleton and the dystrophin glycoprotein complex. May play a role in the regulation of secretory granules via its interaction with PTPRN. This chain is Beta-2-syntrophin (SNTB2), found in Homo sapiens (Human).